Here is a 404-residue protein sequence, read N- to C-terminus: Deoxyguanosinetriphosphate triphosphohydrolase-like protein (404 aa).

Positions 1–32 (MAVGMAAPHATYASDPARSRGRLFDEPPSKTR) are disordered. Basic and acidic residues predominate over residues 22 to 32 (RLFDEPPSKTR). The 149-residue stretch at 69-217 (RLTHTLEVAQ…AAIADDIAYD (149 aa)) folds into the HD domain.

It belongs to the dGTPase family. Type 2 subfamily.

In Nitrobacter hamburgensis (strain DSM 10229 / NCIMB 13809 / X14), this protein is Deoxyguanosinetriphosphate triphosphohydrolase-like protein.